Consider the following 140-residue polypeptide: Holo-[acyl-carrier-protein] synthase (140 aa).

Aspartate 8 and glutamate 62 together coordinate Mg(2+).

It belongs to the P-Pant transferase superfamily. AcpS family. It depends on Mg(2+) as a cofactor.

The protein localises to the cytoplasm. It catalyses the reaction apo-[ACP] + CoA = holo-[ACP] + adenosine 3',5'-bisphosphate + H(+). Transfers the 4'-phosphopantetheine moiety from coenzyme A to a Ser of acyl-carrier-protein. The polypeptide is Holo-[acyl-carrier-protein] synthase (Cupriavidus necator (strain ATCC 17699 / DSM 428 / KCTC 22496 / NCIMB 10442 / H16 / Stanier 337) (Ralstonia eutropha)).